A 424-amino-acid chain; its full sequence is Envelope glycoprotein M (424 aa).

The Intravirion portion of the chain corresponds to 1 to 23 (MASRARMERNYRGLSHIDYVHKK). A helical transmembrane segment spans residues 24–44 (MWVVQAVCFGIAVLVFFGTLV). At 45–94 (AASINLTEGFPCFFAAVVDYRTVNTTLVHTGLTYPRLGGVVPVLFFQTKA) the chain is on the virion surface side. Residues 95–115 (VVFFFYATSIVFVFLVCYITV) traverse the membrane as a helical segment. Topologically, residues 116-143 (GAIISSKKHVGAAYMGSGAFVFSLMASP) are intravirion. Residues 144-164 (LTILLGTVSIWLLQAVVIVLA) form a helical membrane-spanning segment. Residues 165 to 166 (HK) are Virion surface-facing. Residues 167-187 (LIVLAAAVYLVHFSTITFFYG) traverse the membrane as a helical segment. Over 188–226 (YFCGRGVDSKVYAEDISSAKDIDGSLHKLIGNVRAMMVN) the chain is Intravirion. Residues 227–247 (LLSIVYSIILIMSSLMFGMLL) form a helical membrane-spanning segment. At 248 to 261 (ANSFTLKFWHVIVT) the chain is on the virion surface side. A helical membrane pass occupies residues 262 to 282 (VLITTSVLTLIYLLVIEFLIA). Residue R283 is a topological domain, intravirion. Residues 284 to 304 (YVHIILGAYIGLLIGYGMLWT) form a helical membrane-spanning segment. At 305–327 (TTCDYVNRFYYAMGANASNLRIA) the chain is on the virion surface side. Residues 328-348 (CHSVLAVFTVLILLAMVVRLI) traverse the membrane as a helical segment. The Intravirion portion of the chain corresponds to 349-424 (RASLYHRRRS…YSGSESEWDD (76 aa)). The interval 382 to 424 (SYKQRGSQSEDERALTQSRSAEASDEDTIYDRVYSGSESEWDD) is disordered.

It belongs to the herpesviridae glycoprotein M family. As to quaternary structure, interacts (via N-terminus) with gN (via N-terminus). The gM-gN heterodimer forms the gCII complex.

The protein resides in the virion membrane. The protein localises to the host Golgi apparatus. Its subcellular location is the host trans-Golgi network. It localises to the host endosome membrane. It is found in the host nucleus inner membrane. Functionally, envelope glycoprotein important for virion assembly and egress. Plays a role in the correct incorporation of gH-gL into virion membrane. Directs the glycoprotein N (gN) to the host trans-Golgi network. This Gallid herpesvirus 2 (strain Chicken/Md5/ATCC VR-987) (GaHV-2) protein is Envelope glycoprotein M.